The chain runs to 803 residues: E3 ubiquitin-protein ligase UHRF2 (803 aa).

The region spanning 1–78 (MWIQVRTIDG…IQLLVRPDSS (78 aa)) is the Ubiquitin-like domain. 4 stretches are compositionally biased toward polar residues: residues 79-96 (LPSTSKQNDAQVKPSSHN), 106-115 (GGSSSQPSTS), 167-181 (KNGSSYKRTNGNVNH), and 189-200 (KLDNVPSTSNSD). 2 disordered regions span residues 79 to 115 (LPSTSKQNDAQVKPSSHNPPKVKKTARGGSSSQPSTS) and 154 to 200 (RASD…SNSD). Positions 118–312 (TCLIDPGFGL…VDEIFKIEKP (195 aa)) are required for interaction with histone H3. Positions 195–289 (STSNSDSVAA…KEVRVKVFLG (95 aa)) are interaction with PCNP. The PHD-type zinc-finger motif lies at 340–396 (DKTCHMCSCHKCGEKRDPNMQLLCDECNMAYHIYCLSPPLDKVPEEEYWYCPSCKTD). The segment at 415–645 (KMPSASTESR…LQYPAGYPSE (231 aa)) is methyl-CpG binding and interaction with HDAC1. A YDG domain is found at 449–613 (GPIPGIPVGS…FLVWRYLLRR (165 aa)). Residues 643–676 (PSEKEGKKTKGQSKKQGSEATKRPASDDECPGDS) form a disordered region. Positions 658 to 668 (QGSEATKRPAS) are enriched in basic and acidic residues. The residue at position 668 (serine 668) is a Phosphoserine. The segment at 734 to 773 (CVCCQELVYQPVTTECFHNVCKDCLQRSFKAQVFSCPACR) adopts an RING-type zinc-finger fold.

As to quaternary structure, homodimer; disulfide-linked. Binds methylated CpG containing oligonucleotides. Interacts with H3; the interaction has a preference for the 'Lys-9' trimethylated form of H3 (H3K9me3). Interacts with PCNP. Interacts with HDAC1. Interacts directly with CCNE1; the interaction ubiquitinates CCNE1 and appears independent of CCNE1 phosphorylation. Interacts with CCND1; the interaction ubiquitinates CCND1 and appears independent of CCND1 phosphorylation. Interacts with p53/TP53 and RB1. Interacts with UBE2I. Interacts with ZNF618. Interacts with UHRF1. Interacts with FANCD2. Interacts with ATR. Interacts with PCNA. May be autoubiquitinated; which may lead to proteasomal degradation. In terms of processing, phosphorylated. Phosphorylation may be mediated by CDK2. Post-translationally, autosumoylated. In terms of tissue distribution, mostly detected in several tissues, including the thymus, spleen, lung, adrenal gland, and ovary. In addition, found in several tissues in the brain (cerebellum, hippocampus, and cerebral cortex).

It localises to the nucleus. The protein resides in the chromosome. The catalysed reaction is S-ubiquitinyl-[E2 ubiquitin-conjugating enzyme]-L-cysteine + [acceptor protein]-L-lysine = [E2 ubiquitin-conjugating enzyme]-L-cysteine + N(6)-ubiquitinyl-[acceptor protein]-L-lysine.. Its pathway is protein modification; protein ubiquitination. E3 ligase activity is robustly activated by 5-hydroxy-methylcytosine. Functionally, E3 ubiquitin ligase that plays important roles in DNA methylation, histone modifications, cell cycle and DNA repair. Acts as a specific reader for 5-hydroxymethylcytosine (5hmC) and thereby recruits various substrates to these sites to ubiquitinate them. This activity also allows the maintenance of 5mC levels at specific genomic loci and regulates neuron-related gene expression. Participates in cell cycle regulation by ubiquitinating cyclins CCND1 and CCNE1 and thus inducing G1 arrest. Also ubiquitinates PCNP leading to its degradation by the proteasome. Plays an active role in DNA damage repair by ubiquitinating p21/CDKN1A leading to its proteasomal degradation. Also promotes DNA repair by acting as an interstrand cross-links (ICLs) sensor. Mechanistically, cooperates with UHRF1 to ensure recruitment of FANCD2 to ICLs, leading to FANCD2 monoubiquitination and subsequent activation. Contributes to UV-induced DNA damage response by physically interacting with ATR in response to irradiation, thereby promoting ATR activation. In Mus musculus (Mouse), this protein is E3 ubiquitin-protein ligase UHRF2 (Uhrf2).